The following is a 600-amino-acid chain: 1-deoxy-D-xylulose-5-phosphate synthase (600 aa).

Thiamine diphosphate-binding positions include H63 and 104–106 (GHS). D135 lines the Mg(2+) pocket. Residues 136-137 (GA), N164, Y271, and E352 contribute to the thiamine diphosphate site. Position 164 (N164) interacts with Mg(2+).

The protein belongs to the transketolase family. DXPS subfamily. In terms of assembly, homodimer. Mg(2+) serves as cofactor. Requires thiamine diphosphate as cofactor.

It carries out the reaction D-glyceraldehyde 3-phosphate + pyruvate + H(+) = 1-deoxy-D-xylulose 5-phosphate + CO2. Its pathway is metabolic intermediate biosynthesis; 1-deoxy-D-xylulose 5-phosphate biosynthesis; 1-deoxy-D-xylulose 5-phosphate from D-glyceraldehyde 3-phosphate and pyruvate: step 1/1. In terms of biological role, catalyzes the acyloin condensation reaction between C atoms 2 and 3 of pyruvate and glyceraldehyde 3-phosphate to yield 1-deoxy-D-xylulose-5-phosphate (DXP). The sequence is that of 1-deoxy-D-xylulose-5-phosphate synthase from Campylobacter fetus subsp. fetus (strain 82-40).